We begin with the raw amino-acid sequence, 51 residues long: Otoconin-90 (51 aa).

The protein belongs to the phospholipase A2 family. In terms of assembly, interacts with OTOL1.

It is found in the secreted. In terms of biological role, major protein of the otoconia, a calcium carbonate structure in the saccule and utricle of the ear. Together with OTOL1, acts as a scaffold for otoconia biomineralization: sequesters calcium and forms interconnecting fibrils between otoconia that are incorporated into the calcium crystal structure. Together with OTOL1, modulates calcite crystal morphology and growth kinetics. It is unlikely that this protein has phospholipase A2 activity. The polypeptide is Otoconin-90 (OC90) (Cavia porcellus (Guinea pig)).